The following is a 117-amino-acid chain: Large ribosomal subunit protein bL20 (117 aa).

Belongs to the bacterial ribosomal protein bL20 family.

Its function is as follows. Binds directly to 23S ribosomal RNA and is necessary for the in vitro assembly process of the 50S ribosomal subunit. It is not involved in the protein synthesizing functions of that subunit. This chain is Large ribosomal subunit protein bL20 (rplT), found in Rickettsia prowazekii (strain Madrid E).